The following is a 325-amino-acid chain: Beta-ketoacyl-[acyl-carrier-protein] synthase III (325 aa).

Catalysis depends on residues Cys116 and His252. An ACP-binding region spans residues Gln253–Arg257. Asn282 is an active-site residue.

The protein belongs to the thiolase-like superfamily. FabH family. Homodimer.

Its subcellular location is the cytoplasm. It carries out the reaction malonyl-[ACP] + acetyl-CoA + H(+) = 3-oxobutanoyl-[ACP] + CO2 + CoA. It functions in the pathway lipid metabolism; fatty acid biosynthesis. In terms of biological role, catalyzes the condensation reaction of fatty acid synthesis by the addition to an acyl acceptor of two carbons from malonyl-ACP. Catalyzes the first condensation reaction which initiates fatty acid synthesis and may therefore play a role in governing the total rate of fatty acid production. Possesses both acetoacetyl-ACP synthase and acetyl transacylase activities. Its substrate specificity determines the biosynthesis of branched-chain and/or straight-chain of fatty acids. The polypeptide is Beta-ketoacyl-[acyl-carrier-protein] synthase III (Xanthomonas euvesicatoria pv. vesicatoria (strain 85-10) (Xanthomonas campestris pv. vesicatoria)).